The chain runs to 902 residues: Glutamate receptor 4 (902 aa).

An N-terminal signal peptide occupies residues 1–20 (MRIISRQIVLLFSGFWGLAM). At 22-544 (AFPSSVQIGG…GVFSFLDPLA (523 aa)) the chain is on the extracellular side. Residues N52, N56, N258, N371, N407, and N414 are each glycosylated (N-linked (GlcNAc...) asparagine). C84 and C331 form a disulfide bridge. L-glutamate is bound by residues P500, T502, and R507. The helical transmembrane segment at 545–565 (YEIWMCIVFAYIGVSVVLFLV) threads the bilayer. The Cytoplasmic segment spans residues 566–592 (SRFSPYEWHTEEPEDGKEGPSDQPPNE). The segment at residues 593-608 (FGIFNSLWFSLGAFMQ) is an intramembrane region (helical; Pore-forming). The stretch at 609–611 (QGC) is an intramembrane region. C611 carries the S-palmitoyl cysteine lipid modification. The Cytoplasmic portion of the chain corresponds to 612–617 (DISPRS). A helical transmembrane segment spans residues 618-638 (LSGRIVGGVWWFFTLIIISSY). At 639 to 813 (TANLAAFLTV…DKTSALSLSN (175 aa)) the chain is on the extracellular side. S676, T677, and E727 together coordinate L-glutamate. The cysteines at positions 740 and 795 are disulfide-linked. Residues 814 to 834 (VAGVFYILVGGLGLAMLVALI) form a helical membrane-spanning segment. Topologically, residues 835-902 (EFCYKSRAEA…GLAVIASDLP (68 aa)) are cytoplasmic. C837 is lipidated: S-palmitoyl cysteine. S862 is subject to Phosphoserine; by PKC/PRKCG.

Belongs to the glutamate-gated ion channel (TC 1.A.10.1) family. GRIA4 subfamily. As to quaternary structure, homotetramer or heterotetramer of pore-forming glutamate receptor subunits. Tetramers may be formed by the dimerization of dimers. Interacts with EPB41L1 via its C-terminus. Isoform 3 interacts with PICK1. Found in a complex with GRIA1, GRIA2, GRIA3, CNIH2, CNIH3, CACNG2, CACNG3, CACNG4, CACNG5, CACNG7 and CACNG8. Interacts with CACNG5 and PRKCG. Found in a complex with GRIA1, GRIA2, GRIA3, DLG4, CACNG8 and CNIH2. Palmitoylated. Depalmitoylated upon L-glutamate stimulation. ZDHHC3/GODZ specifically palmitoylates Cys-611, which leads to Golgi retention and decreased cell surface expression. In contrast, Cys-837 palmitoylation does not affect cell surface expression but regulates stimulation-dependent endocytosis. In terms of processing, phosphorylated at Ser-862 by PRKCG; phosphorylation increases plasma membrane-associated GRI4 expression.

Its subcellular location is the cell membrane. The protein localises to the postsynaptic cell membrane. The protein resides in the cell projection. It is found in the dendrite. The catalysed reaction is Ca(2+)(in) = Ca(2+)(out). It catalyses the reaction Na(+)(in) = Na(+)(out). It carries out the reaction Mg(2+)(in) = Mg(2+)(out). Ionotropic glutamate receptor that functions as a ligand-gated cation channel, gated by L-glutamate and glutamatergic agonists such as alpha-amino-3-hydroxy-5-methyl-4-isoxazolepropionic acid (AMPA), quisqualic acid, and kainic acid. L-glutamate acts as an excitatory neurotransmitter at many synapses in the central nervous system and plays an important role in fast excitatory synaptic transmission. Binding of the excitatory neurotransmitter L-glutamate induces a conformation change, leading to the opening of the cation channel, and thereby converts the chemical signal to an electrical impulse upon entry of monovalent and divalent cations such as sodium and calcium. The receptor then desensitizes rapidly and enters a transient inactive state, characterized by the presence of bound agonist. In the presence of CACNG8, shows resensitization which is characterized by a delayed accumulation of current flux upon continued application of L-glutamate. This chain is Glutamate receptor 4, found in Macaca fascicularis (Crab-eating macaque).